The sequence spans 692 residues: Elongation factor G (692 aa).

The tr-type G domain occupies 8–282 (EKTRNIGIMA…AVLDYLPAPT (275 aa)). GTP-binding positions include 17 to 24 (AHIDAGKT), 81 to 85 (DTPGH), and 135 to 138 (NKMD).

The protein belongs to the TRAFAC class translation factor GTPase superfamily. Classic translation factor GTPase family. EF-G/EF-2 subfamily.

It is found in the cytoplasm. Functionally, catalyzes the GTP-dependent ribosomal translocation step during translation elongation. During this step, the ribosome changes from the pre-translocational (PRE) to the post-translocational (POST) state as the newly formed A-site-bound peptidyl-tRNA and P-site-bound deacylated tRNA move to the P and E sites, respectively. Catalyzes the coordinated movement of the two tRNA molecules, the mRNA and conformational changes in the ribosome. This Bacillus licheniformis (strain ATCC 14580 / DSM 13 / JCM 2505 / CCUG 7422 / NBRC 12200 / NCIMB 9375 / NCTC 10341 / NRRL NRS-1264 / Gibson 46) protein is Elongation factor G.